Here is a 157-residue protein sequence, read N- to C-terminus: Cell number regulator 10 (157 aa).

The next 2 membrane-spanning stretches (helical) occupy residues 41–57 (DCGL…ITFG) and 66–83 (GATS…LAYF).

Belongs to the cornifelin family. In terms of tissue distribution, expressed in roots, leaves, stalks, immature ears and silks.

It is found in the membrane. The chain is Cell number regulator 10 (CNR10) from Zea mays (Maize).